The chain runs to 855 residues: Spindle and centriole-associated protein 1 (855 aa).

The tract at residues 164–200 (QALNDVDGEEEGTVTSQSGESENENELDNSLNSQSNT) is disordered. Residue threonine 235 is modified to Phosphothreonine. The segment covering 300–311 (KPNLHALSKPKK) has biased composition (basic residues). Residues 300–328 (KPNLHALSKPKKNMLSGSTTSADLPNRTN) are disordered. Residues 314 to 328 (LSGSTTSADLPNRTN) are compositionally biased toward polar residues. A coiled-coil region spans residues 325-437 (NRTNSNLDVL…TQARLRQYMV (113 aa)). Phosphoserine occurs at positions 640 and 644. Positions 725–751 (GSMEERIAELNRQSMEARGKLLQLIEQ) form a coiled coil. Phosphoserine is present on residues serine 760, serine 764, and serine 819. Residues 789–834 (EAPESSKCSTVSPVSEINTRRSSGATSNSCSPLNATSGSGRFTPLN) are disordered. Positions 794–828 (SKCSTVSPVSEINTRRSSGATSNSCSPLNATSGSG) are enriched in polar residues.

As to quaternary structure, interacts with CEP120.

It is found in the cytoplasm. The protein localises to the cytoskeleton. Its subcellular location is the microtubule organizing center. It localises to the centrosome. The protein resides in the centriole. It is found in the spindle. In terms of biological role, regulator required for centriole duplication, for proper bipolar spindle formation and chromosome congression in mitosis. The polypeptide is Spindle and centriole-associated protein 1 (SPICE1) (Pongo abelii (Sumatran orangutan)).